A 314-amino-acid chain; its full sequence is Replication initiation protein (314 aa).

A compositionally biased stretch (polar residues) spans 1–10 (MSKNNHANHS). The tract at residues 1–25 (MSKNNHANHSNHLENHDLDNFSKTG) is disordered. Over residues 11–20 (NHLENHDLDN) the composition is skewed to basic and acidic residues.

The protein belongs to the plasmid replication initiation factor family.

Functionally, this protein is probably a specific topoisomerase involved in initiating replication. This protein is specifically required and may be rate-limiting for replication of the plasmid in vivo. The sequence is that of Replication initiation protein (repN) from Staphylococcus aureus.